A 211-amino-acid polypeptide reads, in one-letter code: Putative 3-methyladenine DNA glycosylase (211 aa).

Belongs to the DNA glycosylase MPG family.

The protein is Putative 3-methyladenine DNA glycosylase of Granulibacter bethesdensis (strain ATCC BAA-1260 / CGDNIH1).